The chain runs to 167 residues: Small ribosomal subunit protein uS5 (167 aa).

Residues 12 to 75 (LQEKLIAVNR…EKARRNMVTV (64 aa)) form the S5 DRBM domain.

The protein belongs to the universal ribosomal protein uS5 family. As to quaternary structure, part of the 30S ribosomal subunit. Contacts proteins S4 and S8.

In terms of biological role, with S4 and S12 plays an important role in translational accuracy. Located at the back of the 30S subunit body where it stabilizes the conformation of the head with respect to the body. This Shewanella denitrificans (strain OS217 / ATCC BAA-1090 / DSM 15013) protein is Small ribosomal subunit protein uS5.